The following is a 153-amino-acid chain: UPF0311 protein Rpal_1987 (153 aa).

It belongs to the UPF0311 family.

This is UPF0311 protein Rpal_1987 from Rhodopseudomonas palustris (strain TIE-1).